A 597-amino-acid polypeptide reads, in one-letter code: Elongation factor 4 (597 aa).

One can recognise a tr-type G domain in the interval 2–184 (DHIRNFSIIA…SLIAKVPPPK (183 aa)). Residues 14–19 (DHGKST) and 131–134 (NKID) each bind GTP.

Belongs to the TRAFAC class translation factor GTPase superfamily. Classic translation factor GTPase family. LepA subfamily.

It localises to the cell inner membrane. The enzyme catalyses GTP + H2O = GDP + phosphate + H(+). Functionally, required for accurate and efficient protein synthesis under certain stress conditions. May act as a fidelity factor of the translation reaction, by catalyzing a one-codon backward translocation of tRNAs on improperly translocated ribosomes. Back-translocation proceeds from a post-translocation (POST) complex to a pre-translocation (PRE) complex, thus giving elongation factor G a second chance to translocate the tRNAs correctly. Binds to ribosomes in a GTP-dependent manner. This chain is Elongation factor 4, found in Burkholderia lata (strain ATCC 17760 / DSM 23089 / LMG 22485 / NCIMB 9086 / R18194 / 383).